The chain runs to 99 residues: Large ribosomal subunit protein uL23 (99 aa).

The protein belongs to the universal ribosomal protein uL23 family. As to quaternary structure, part of the 50S ribosomal subunit. Contacts protein L29, and trigger factor when it is bound to the ribosome.

Functionally, one of the early assembly proteins it binds 23S rRNA. One of the proteins that surrounds the polypeptide exit tunnel on the outside of the ribosome. Forms the main docking site for trigger factor binding to the ribosome. In Pseudomonas savastanoi pv. phaseolicola (strain 1448A / Race 6) (Pseudomonas syringae pv. phaseolicola (strain 1448A / Race 6)), this protein is Large ribosomal subunit protein uL23.